The following is a 154-amino-acid chain: Myoglobin (154 aa).

One can recognise a Globin domain in the interval 2–148; that stretch reads GLSDGEWQLV…FRNDMAAKYK (147 aa). Serine 4 is modified (phosphoserine). Histidine 65 provides a ligand contact to nitrite. Histidine 65 is a binding site for O2. Position 68 is a phosphothreonine (threonine 68). Histidine 94 contacts heme b.

It belongs to the globin family. In terms of assembly, monomeric.

The protein localises to the cytoplasm. Its subcellular location is the sarcoplasm. The catalysed reaction is Fe(III)-heme b-[protein] + nitric oxide + H2O = Fe(II)-heme b-[protein] + nitrite + 2 H(+). The enzyme catalyses H2O2 + AH2 = A + 2 H2O. Functionally, monomeric heme protein which primary function is to store oxygen and facilitate its diffusion within muscle tissues. Reversibly binds oxygen through a pentacoordinated heme iron and enables its timely and efficient release as needed during periods of heightened demand. Depending on the oxidative conditions of tissues and cells, and in addition to its ability to bind oxygen, it also has a nitrite reductase activity whereby it regulates the production of bioactive nitric oxide. Under stress conditions, like hypoxia and anoxia, it also protects cells against reactive oxygen species thanks to its pseudoperoxidase activity. This is Myoglobin (MB) from Ornithorhynchus anatinus (Duckbill platypus).